A 452-amino-acid polypeptide reads, in one-letter code: GTPase Der (452 aa).

EngA-type G domains are found at residues 4–169 (PIVA…PSPD) and 177–352 (INVS…EEHR). Residues 10–17 (GRPNVGKS), 57–61 (DTGGL), 120–123 (NKCE), 183–190 (GRPNVGKS), 230–234 (DTAGI), and 295–298 (NKWD) contribute to the GTP site. The KH-like domain occupies 353 to 438 (RRVNTSVVNE…PIRLLWRGKK (86 aa)).

It belongs to the TRAFAC class TrmE-Era-EngA-EngB-Septin-like GTPase superfamily. EngA (Der) GTPase family. Associates with the 50S ribosomal subunit.

Functionally, GTPase that plays an essential role in the late steps of ribosome biogenesis. The sequence is that of GTPase Der from Crocosphaera subtropica (strain ATCC 51142 / BH68) (Cyanothece sp. (strain ATCC 51142)).